Here is a 204-residue protein sequence, read N- to C-terminus: DNA-directed RNA polymerase subunit gamma (204 aa).

The Zn(2+) site is built by Cys-34, Cys-36, Cys-49, and Cys-52.

The protein belongs to the RNA polymerase beta' chain family. RpoC1 subfamily. As to quaternary structure, in cyanobacteria the RNAP catalytic core is composed of 2 alpha, 1 beta, 1 beta', 1 gamma and 1 omega subunit. When a sigma factor is associated with the core the holoenzyme is formed, which can initiate transcription. Zn(2+) is required as a cofactor.

The catalysed reaction is RNA(n) + a ribonucleoside 5'-triphosphate = RNA(n+1) + diphosphate. DNA-dependent RNA polymerase catalyzes the transcription of DNA into RNA using the four ribonucleoside triphosphates as substrates. The chain is DNA-directed RNA polymerase subunit gamma (rpoC1) from Prochlorococcus marinus (strain DV1).